A 179-amino-acid chain; its full sequence is Adenine phosphoribosyltransferase (179 aa).

This sequence belongs to the purine/pyrimidine phosphoribosyltransferase family. Homodimer.

It localises to the cytoplasm. It carries out the reaction AMP + diphosphate = 5-phospho-alpha-D-ribose 1-diphosphate + adenine. It functions in the pathway purine metabolism; AMP biosynthesis via salvage pathway; AMP from adenine: step 1/1. In terms of biological role, catalyzes a salvage reaction resulting in the formation of AMP, that is energically less costly than de novo synthesis. The sequence is that of Adenine phosphoribosyltransferase from Helicobacter acinonychis (strain Sheeba).